The primary structure comprises 726 residues: Sensory/regulatory protein RpfC (726 aa).

The Periplasmic portion of the chain corresponds to 1 to 22 (MKSPLPWLKRRLSGRADSEHAQ). The sensor stretch occupies residues 1-22 (MKSPLPWLKRRLSGRADSEHAQ). Residues 23–40 (NLIRIIITTLFISYLGWR) form a helical membrane-spanning segment. Over 41-51 (YQHTHGDTLMA) the chain is Cytoplasmic. A helical membrane pass occupies residues 52–72 (TWLILVGELLVSLGLMVAILL). Residues 73–94 (RPQVSHTRRLIGMLLDYTCTGA) are Periplasmic-facing. Residues 95-115 (IMAIQGEPASPLYAVCMWVTI) traverse the membrane as a helical segment. The Cytoplasmic segment spans residues 116 to 127 (GNGLRYGSNYLR). The chain crosses the membrane as a helical span at residues 128-148 (AATAMGSLCFLGAILISPYWK). The Periplasmic portion of the chain corresponds to 149–151 (ANP). A helical transmembrane segment spans residues 152 to 172 (YLSWGLLLGLIAVPLYFDSLL). Residues 173–726 (RAMTRAVREA…DGECSPRSNE (554 aa)) are Cytoplasmic-facing. Residues 195 to 417 (NMSHEFRTPL…VFWFELPMAI (223 aa)) enclose the Histidine kinase domain. Phosphohistidine; by autocatalysis is present on His-198. In terms of domain architecture, Response regulatory spans 463 to 581 (RMLVADDHEA…KLLDTLADLA (119 aa)). Asp-512 is modified (4-aspartylphosphate). Residues 618 to 711 (GEEFERQFVR…KAGKDALDAR (94 aa)) form the HPt domain. The residue at position 657 (His-657) is a Phosphohistidine.

In terms of assembly, at low DSF concentrations, interacts with RpfF. Autophosphorylated. Activation may require a sequential transfer of a phosphate group from a His in the primary transmitter domain, to an Asp in the receiver domain and to a His in the secondary transmitter domain.

It is found in the cell inner membrane. It carries out the reaction ATP + protein L-histidine = ADP + protein N-phospho-L-histidine.. With respect to regulation, binding of DSF to the sensor region causes allosteric change, which facilitates RpfC autophosphorylation. Functionally, hybrid sensor kinase that regulates diverse biological functions through two distinct molecular mechanisms. At low cell density, the extracellular concentration of the diffusible signaling factor (DSF) is below a threshold, and unphosphorylated RpfC is involved in the negative regulation of DSF synthesis, via direct interaction with the DSF synthase RpfF. Interaction prevents synthesis of DSF, which remains at a basal level. This activity does not involve the phosphorelay mechanism and is not dependent on RpfG. Is also member of the two-component regulatory system RpfG/RpfC, which is involved in the perception and response to DSF, which is essential for cell-cell signaling. At high cell density, the level of extracellular DSF increases and binding of DSF to the sensor region of RpfC causes autophosphorylation of RpfC, which results in the release of RpfF and the activation of RpfG via a four-step phosphorelay. Activation of RpfG leads to the positive regulation of biofilm dispersal and the production of virulence factors. The protein is Sensory/regulatory protein RpfC (rpfC) of Xanthomonas campestris pv. campestris (strain 8004).